The sequence spans 611 residues: Polyphenol oxidase 4 (611 aa).

The Cu cation site is built by histidine 57, histidine 82, histidine 91, histidine 251, histidine 255, and histidine 283. The 2'-(S-cysteinyl)-histidine (Cys-His) cross-link spans 80–82 (CTH). Histidine 255 is a binding site for substrate. Residues 380-611 (IKKSEGGKNP…GGLGALGRIF (232 aa)) constitute a propeptide, removed in mature form.

This sequence belongs to the tyrosinase family. Heterotetramer. Cu(2+) serves as cofactor. Post-translationally, the C-ter is probably cleaved after Gly-379 since the mature active protein is smaller than the protein encoded by the gene.

The enzyme catalyses 2 L-dopa + O2 = 2 L-dopaquinone + 2 H2O. It carries out the reaction L-tyrosine + O2 = L-dopaquinone + H2O. Its function is as follows. Copper-containing oxidase that catalyzes both the o-hydroxylation of monophenols and the subsequent oxidation of the resulting o-diphenols into reactive o-quinones, which evolve spontaneously to produce intermediates, which associate in dark brown pigments. Involved in the initial step of melanin synthesis. Melanins constitute a mechanism of defense and resistance to stress such as UV radiations, free radicals, gamma rays, dehydratation and extreme temperatures, and contribute to the fungal cell-wall resistance against hydrolytic enzymes in avoiding cellular lysis. Fungal pigments are also involved in the formation and stability of spores. This chain is Polyphenol oxidase 4 (PPO4), found in Agaricus bisporus (White button mushroom).